The primary structure comprises 379 residues: Cytochrome b (379 aa).

A run of 4 helical transmembrane segments spans residues 33–53, 77–98, 113–133, and 178–198; these read FGSL…FLAM, WLIR…FIHV, WNIG…GYVL, and FFAF…VHLL. Heme b-binding residues include His-83 and His-97. 2 residues coordinate heme b: His-182 and His-196. A ubiquinone is bound at residue His-201. 4 helical membrane-spanning segments follow: residues 226-246, 288-308, 320-340, and 347-367; these read TKDL…ALFF, LGGV…PLLN, VTQV…WIGG, and FTMI…ILMP.

It belongs to the cytochrome b family. The cytochrome bc1 complex contains 11 subunits: 3 respiratory subunits (MT-CYB, CYC1 and UQCRFS1), 2 core proteins (UQCRC1 and UQCRC2) and 6 low-molecular weight proteins (UQCRH/QCR6, UQCRB/QCR7, UQCRQ/QCR8, UQCR10/QCR9, UQCR11/QCR10 and a cleavage product of UQCRFS1). This cytochrome bc1 complex then forms a dimer. It depends on heme b as a cofactor.

The protein resides in the mitochondrion inner membrane. Its function is as follows. Component of the ubiquinol-cytochrome c reductase complex (complex III or cytochrome b-c1 complex) that is part of the mitochondrial respiratory chain. The b-c1 complex mediates electron transfer from ubiquinol to cytochrome c. Contributes to the generation of a proton gradient across the mitochondrial membrane that is then used for ATP synthesis. This chain is Cytochrome b (MT-CYB), found in Akodon kofordi (Koford's grass mouse).